We begin with the raw amino-acid sequence, 307 residues long: Nucleotide-binding protein ACP_0619 (307 aa).

The span at 1-14 shows a compositional bias: basic and acidic residues; that stretch reads MPAPEPTRRAKKDA. The interval 1-23 is disordered; that stretch reads MPAPEPTRRAKKDASASPSPAHP. 33–40 is a binding site for ATP; that stretch reads GLSGAGKG. 83–86 contributes to the GTP binding site; that stretch reads DVRE.

It belongs to the RapZ-like family.

Its function is as follows. Displays ATPase and GTPase activities. The polypeptide is Nucleotide-binding protein ACP_0619 (Acidobacterium capsulatum (strain ATCC 51196 / DSM 11244 / BCRC 80197 / JCM 7670 / NBRC 15755 / NCIMB 13165 / 161)).